Here is a 694-residue protein sequence, read N- to C-terminus: Glycine--tRNA ligase beta subunit (694 aa).

It belongs to the class-II aminoacyl-tRNA synthetase family. As to quaternary structure, tetramer of two alpha and two beta subunits.

It is found in the cytoplasm. It catalyses the reaction tRNA(Gly) + glycine + ATP = glycyl-tRNA(Gly) + AMP + diphosphate. This Acidithiobacillus ferrooxidans (strain ATCC 23270 / DSM 14882 / CIP 104768 / NCIMB 8455) (Ferrobacillus ferrooxidans (strain ATCC 23270)) protein is Glycine--tRNA ligase beta subunit.